Here is a 426-residue protein sequence, read N- to C-terminus: Mediator of RNA polymerase II transcription subunit 1 (426 aa).

Residues 324–356 form a disordered region; that stretch reads VGDAPAPAAQPPLHRRRSSNKGCRRASAAESAT. Positions 336-347 are enriched in basic residues; it reads LHRRRSSNKGCR.

This sequence belongs to the Mediator complex subunit 1 family. In terms of assembly, component of the Mediator complex.

The protein localises to the nucleus. Its function is as follows. Component of the Mediator complex, a coactivator involved in the regulated transcription of nearly all RNA polymerase II-dependent genes. Mediator functions as a bridge to convey information from gene-specific regulatory proteins to the basal RNA polymerase II transcription machinery. Mediator is recruited to promoters by direct interactions with regulatory proteins and serves as a scaffold for the assembly of a functional preinitiation complex with RNA polymerase II and the general transcription factors. The chain is Mediator of RNA polymerase II transcription subunit 1 (MED1) from Eremothecium gossypii (strain ATCC 10895 / CBS 109.51 / FGSC 9923 / NRRL Y-1056) (Yeast).